Here is a 182-residue protein sequence, read N- to C-terminus: Protein Syd (182 aa).

This sequence belongs to the Syd family.

It is found in the cell inner membrane. Its function is as follows. Interacts with the SecY protein in vivo. May bind preferentially to an uncomplexed state of SecY, thus functioning either as a chelating agent for excess SecY in the cell or as a regulatory factor that negatively controls the translocase function. In Aeromonas hydrophila subsp. hydrophila (strain ATCC 7966 / DSM 30187 / BCRC 13018 / CCUG 14551 / JCM 1027 / KCTC 2358 / NCIMB 9240 / NCTC 8049), this protein is Protein Syd.